Reading from the N-terminus, the 163-residue chain is Choriogonadotropin subunit beta variant 2 (163 aa).

A signal peptide spans 1–18; that stretch reads MSKGLLLLLLLSMGGTWA. Cystine bridges form between Cys-27–Cys-75, Cys-41–Cys-90, Cys-44–Cys-128, Cys-52–Cys-106, Cys-56–Cys-108, and Cys-111–Cys-118. Asn-31 and Asn-48 each carry an N-linked (GlcNAc...) asparagine glycan. Positions 129–163 are disordered; the sequence is DDPRFQASSSSKAPPPSLPSPSRLPGPSDTPILPQ. Residues 141-152 show a composition bias toward pro residues; the sequence is APPPSLPSPSRL.

Belongs to the glycoprotein hormones subunit beta family. In terms of tissue distribution, expressed in placenta, testis and pituitary.

The protein localises to the secreted. This chain is Choriogonadotropin subunit beta variant 2 (CGB2), found in Homo sapiens (Human).